Here is a 179-residue protein sequence, read N- to C-terminus: tRNA-splicing endonuclease (179 aa).

Residues Tyr115, His123, and Lys154 contribute to the active site.

This sequence belongs to the tRNA-intron endonuclease family. Archaeal short subfamily. In terms of assembly, homotetramer; although the tetramer contains four active sites, only two participate in the cleavage. Therefore, it should be considered as a dimer of dimers.

It catalyses the reaction pretRNA = a 3'-half-tRNA molecule with a 5'-OH end + a 5'-half-tRNA molecule with a 2',3'-cyclic phosphate end + an intron with a 2',3'-cyclic phosphate and a 5'-hydroxyl terminus.. Its function is as follows. Endonuclease that removes tRNA introns. Cleaves pre-tRNA at the 5'- and 3'-splice sites to release the intron. The products are an intron and two tRNA half-molecules bearing 2',3' cyclic phosphate and 5'-OH termini. Recognizes a pseudosymmetric substrate in which 2 bulged loops of 3 bases are separated by a stem of 4 bp. This chain is tRNA-splicing endonuclease, found in Methanopyrus kandleri (strain AV19 / DSM 6324 / JCM 9639 / NBRC 100938).